Here is a 25-residue protein sequence, read N- to C-terminus: Caerin-1.19 (25 aa).

Leu25 carries the leucine amide modification.

The protein belongs to the frog skin active peptide (FSAP) family. Caerin subfamily. As to expression, expressed by the skin dorsal glands.

It is found in the secreted. In terms of biological role, caerin-1.19 shows significant activity against Gram-positive organisms, but is less effective against Gram-negative organisms. This is Caerin-1.19 from Ranoidea gracilenta (Dainty green tree frog).